The chain runs to 549 residues: Hydroxylamine reductase (549 aa).

[4Fe-4S] cluster is bound by residues cysteine 5, cysteine 8, cysteine 17, and cysteine 23. Hybrid [4Fe-2O-2S] cluster-binding residues include histidine 243, glutamate 267, cysteine 311, cysteine 403, cysteine 431, cysteine 456, glutamate 491, and lysine 493. Cysteine 403 is modified (cysteine persulfide).

It belongs to the HCP family. The cofactor is [4Fe-4S] cluster. Requires hybrid [4Fe-2O-2S] cluster as cofactor.

The protein resides in the cytoplasm. It catalyses the reaction A + NH4(+) + H2O = hydroxylamine + AH2 + H(+). Its function is as follows. Catalyzes the reduction of hydroxylamine to form NH(3) and H(2)O. The sequence is that of Hydroxylamine reductase from Desulfitobacterium hafniense (strain Y51).